Here is a 140-residue protein sequence, read N- to C-terminus: ATP synthase epsilon chain (140 aa).

This sequence belongs to the ATPase epsilon chain family. F-type ATPases have 2 components, CF(1) - the catalytic core - and CF(0) - the membrane proton channel. CF(1) has five subunits: alpha(3), beta(3), gamma(1), delta(1), epsilon(1). CF(0) has three main subunits: a, b and c.

It localises to the cell membrane. Its function is as follows. Produces ATP from ADP in the presence of a proton gradient across the membrane. This chain is ATP synthase epsilon chain (atpC), found in Enterococcus hirae (strain ATCC 9790 / DSM 20160 / JCM 8729 / LMG 6399 / NBRC 3181 / NCIMB 6459 / NCDO 1258 / NCTC 12367 / WDCM 00089 / R).